Here is a 975-residue protein sequence, read N- to C-terminus: Protein HIRA (975 aa).

WD repeat units lie at residues 10–50 (RHEG…KDND), 64–103 (DHFGTVNCVRWAHHGRYLASGSDDQVIQIHERKAGTGTSE), 123–162 (GHTADVVDLNWSPDDSTLASGSLDNTVHIWSMANGICTAV), 165–204 (GHSSLVKGVTWDPIGSFIASQSDDKTVIIWRTSDWSLAHR), 214–256 (GSTF…ATFD), 259–331 (GHNA…PLFV), and 335–374 (FFTQSVVDLSWSPDGYSLFACSLDGSVATFHFEAKELGYR). Residues 418–433 (KKVSSVQQFQSPPKVS) show a composition bias toward low complexity. 2 disordered regions span residues 418 to 510 (KKVS…RSQN) and 948 to 975 (NVEQMDVTPTPPPPPPAAATEGNNNGAS). The segment covering 435–445 (DAPNPSTSVPN) has biased composition (polar residues). Positions 478 to 492 (KQREYRRPDGRKRII) are enriched in basic and acidic residues. Positions 499–510 (PSNQDMSNRSQN) are enriched in polar residues. The stretch at 923 to 954 (ATNRKVQRLLNEFMDLLSEYEAAETNVEQMDV) forms a coiled coil.

This sequence belongs to the WD repeat HIR1 family.

It is found in the nucleus. Its function is as follows. Histone chaperone involved in maintining knox genes silencing throughout leaf development. This Oryza sativa subsp. japonica (Rice) protein is Protein HIRA.